The sequence spans 272 residues: MMACHC-like protein (272 aa).

Residues Asp121, 132–135 (ILMQ), and 146–148 (YYQ) contribute to the substrate site.

This sequence belongs to the MMACHC family. FAD is required as a cofactor. FMN serves as cofactor.

The protein localises to the cytoplasm. Catalyzes the reductive dealkylation of cyanocobalamin to cob(II)alamin, using FAD or FMN as cofactor and NADPH as cosubstrate. Can also catalyze the glutathione-dependent reductive demethylation of methylcobalamin, and, with much lower efficiency, the glutathione-dependent reductive demethylation of adenosylcobalamin. Under anaerobic conditions cob(I)alamin is the first product; it is highly reactive and is converted to aquocob(II)alamin in the presence of oxygen. Binds cyanocobalamin, adenosylcobalamin, methylcobalamin and other, related vitamin B12 derivatives. This Caenorhabditis elegans protein is MMACHC-like protein (cblc-1).